The sequence spans 332 residues: Ribosomal RNA small subunit methyltransferase C (332 aa).

It belongs to the methyltransferase superfamily. RsmC family. As to quaternary structure, monomer.

The protein localises to the cytoplasm. The enzyme catalyses guanosine(1207) in 16S rRNA + S-adenosyl-L-methionine = N(2)-methylguanosine(1207) in 16S rRNA + S-adenosyl-L-homocysteine + H(+). Specifically methylates the guanine in position 1207 of 16S rRNA in the 30S particle. In Pseudomonas putida (strain ATCC 47054 / DSM 6125 / CFBP 8728 / NCIMB 11950 / KT2440), this protein is Ribosomal RNA small subunit methyltransferase C.